The primary structure comprises 191 residues: MAARAQAWLFAAALVIFHGSEYVLAAAFHGRRNVTATSLLISKQYVLAMSFAMLEHLTEALLFPELKEYWFVSYVGLVMVIIGEVIRKLAVVTAGRSFTHVIRIHYEDQHKLITHGVYRLMRHPGYSGFLIWAVGTQVMLCNPLSTVAFTLVLWRFFSKRIPYEEFFLRQFFGREYEEYAQKVHSGLPFIE.

Helical transmembrane passes span 8 to 28 (WLFA…AAAF), 45 to 65 (YVLA…LFPE), and 66 to 86 (LKEY…GEVI). S-adenosyl-L-methionine is bound by residues 110–113 (HKLI), Y118, and 123–126 (HPGY). The chain crosses the membrane as a helical span at residues 129–149 (FLIWAVGTQVMLCNPLSTVAF). Substrate is bound at residue R160. S-adenosyl-L-methionine is bound at residue E164.

This sequence belongs to the class VI-like SAM-binding methyltransferase superfamily. Isoprenylcysteine carboxyl methyltransferase family. Zn(2+) is required as a cofactor.

The protein localises to the endoplasmic reticulum membrane. It catalyses the reaction [protein]-C-terminal S-[(2E,6E)-farnesyl]-L-cysteine + S-adenosyl-L-methionine = [protein]-C-terminal S-[(2E,6E)-farnesyl]-L-cysteine methyl ester + S-adenosyl-L-homocysteine. Functionally, catalyzes the post-translational methylation of isoprenylated C-terminal cysteine residues. Carboxyl methylation is a reversible and potentially regulated step in the post-translational modification of prenylated proteins. The protein is Probable protein-S-isoprenylcysteine O-methyltransferase (ICMT) of Oryza sativa subsp. indica (Rice).